The chain runs to 199 residues: uncharacterized protein (199 aa).

4 consecutive transmembrane segments (helical) span residues 40 to 60, 86 to 106, 117 to 137, and 166 to 186; these read LLIC…FCFL, VLTG…TFPF, TSWP…LTSS, and FLLA…ALIL.

Its subcellular location is the membrane. This is an uncharacterized protein from Saccharomyces cerevisiae (strain ATCC 204508 / S288c) (Baker's yeast).